The sequence spans 211 residues: Riboflavin transporter RibU (211 aa).

A run of 5 helical transmembrane segments spans residues 34–54 (AYIA…FPLI), 66–86 (ILPV…GVLL), 104–124 (IGLP…SYFW), 134–154 (ILGS…LNYI), and 180–200 (AMVV…FALI).

Belongs to the prokaryotic riboflavin transporter (P-RFT) (TC 2.A.87) family. As to quaternary structure, forms a stable energy-coupling factor (ECF) transporter complex composed of 2 membrane-embedded substrate-binding proteins (S component), 2 ATP-binding proteins (A component) and 2 transmembrane proteins (T component) upon coexpression of the 4 components in E.coli.

The protein localises to the cell membrane. Substrate-binding (S) component of an energy-coupling factor (ECF) ABC-transporter complex. Mediates riboflavin uptake, may also transport FMN and roseoflavin. Probably a riboflavin-binding protein that interacts with the energy-coupling factor (ECF) ABC-transporter complex. Unlike classic ABC transporters this ECF transporter provides the energy necessary to transport a number of different substrates. The substrates themselves are bound by transmembrane, not extracytoplasmic soluble proteins. Expression of the complex plus RibU in E.coli allows riboflavin uptake. This chain is Riboflavin transporter RibU (ribU), found in Streptococcus thermophilus (strain ATCC BAA-250 / LMG 18311).